Reading from the N-terminus, the 172-residue chain is Adenine phosphoribosyltransferase (172 aa).

Belongs to the purine/pyrimidine phosphoribosyltransferase family. As to quaternary structure, homodimer.

Its subcellular location is the cytoplasm. The enzyme catalyses AMP + diphosphate = 5-phospho-alpha-D-ribose 1-diphosphate + adenine. It functions in the pathway purine metabolism; AMP biosynthesis via salvage pathway; AMP from adenine: step 1/1. Functionally, catalyzes a salvage reaction resulting in the formation of AMP, that is energically less costly than de novo synthesis. This is Adenine phosphoribosyltransferase from Herpetosiphon aurantiacus (strain ATCC 23779 / DSM 785 / 114-95).